We begin with the raw amino-acid sequence, 239 residues long: tRNA (guanine-N(7)-)-methyltransferase (239 aa).

Positions 69, 94, 121, and 144 each coordinate S-adenosyl-L-methionine. The active site involves Asp-144. Position 148 (Lys-148) interacts with substrate. Positions 150–155 (RHNKRR) are interaction with RNA. Substrate is bound by residues Asp-180 and 217–220 (TKFE).

The protein belongs to the class I-like SAM-binding methyltransferase superfamily. TrmB family. Monomer.

The catalysed reaction is guanosine(46) in tRNA + S-adenosyl-L-methionine = N(7)-methylguanosine(46) in tRNA + S-adenosyl-L-homocysteine. Its pathway is tRNA modification; N(7)-methylguanine-tRNA biosynthesis. Its function is as follows. Catalyzes the formation of N(7)-methylguanine at position 46 (m7G46) in tRNA. This Salmonella choleraesuis (strain SC-B67) protein is tRNA (guanine-N(7)-)-methyltransferase.